The sequence spans 493 residues: 3-octaprenyl-4-hydroxybenzoate carboxy-lyase (493 aa).

Residue asparagine 172 participates in Mn(2+) binding. Prenylated FMN-binding positions include 175-177 (IYR), 189-191 (RWL), and 194-195 (RG). Residue glutamate 238 participates in Mn(2+) binding. Aspartate 287 functions as the Proton donor in the catalytic mechanism.

It belongs to the UbiD family. Homohexamer. Requires prenylated FMN as cofactor. It depends on Mn(2+) as a cofactor.

The protein resides in the cell membrane. The enzyme catalyses a 4-hydroxy-3-(all-trans-polyprenyl)benzoate + H(+) = a 2-(all-trans-polyprenyl)phenol + CO2. It participates in cofactor biosynthesis; ubiquinone biosynthesis. Its function is as follows. Catalyzes the decarboxylation of 3-octaprenyl-4-hydroxy benzoate to 2-octaprenylphenol, an intermediate step in ubiquinone biosynthesis. The polypeptide is 3-octaprenyl-4-hydroxybenzoate carboxy-lyase (Cellvibrio japonicus (strain Ueda107) (Pseudomonas fluorescens subsp. cellulosa)).